The primary structure comprises 365 residues: MAGKSAEEEHPIKAYGWAVKDRTTGILSPFKFSRRATGDDDVRIKILYCGICHTDLASIKNEYEFLSYPLVPGMEIVGIATEVGKDVTKVKVGEKVALSAYLGCCGKCYSCVNELENYCPEVIIGYGTPYHDGTICYGGLSNETVANQSFVLRFPERLSPAGGAPLLSAGITSFSAMRNSGIDKPGLHVGVVGLGGLGHLAVKFAKAFGLKVTVISTTPSKKDDAINGLGADGFLLSRDDEQMKAAIGTLDAIIDTLAVVHPIAPLLDLLRSQGKFLLLGAPSQSLELPPIPLLSGGKSIIGSAAGNVKQTQEMLDFAAEHDITANVEIIPIEYINTAMERLDKGDVRYRFVVDIENTLTPPSEL.

The Zn(2+) site is built by C105, C108, C111, and C119. N-linked (GlcNAc...) asparagine glycans are attached at residues N142 and N147. Positions 194, 196, 197, 216, 217, 218, 221, 279, 281, 303, 305, and 350 each coordinate NADP(+).

The protein belongs to the zinc-containing alcohol dehydrogenase family. As to quaternary structure, homodimer. Interaction with catharanthine synthase (CS) and tabersonine synthase (TS). It depends on Zn(2+) as a cofactor.

It localises to the cytoplasm. The protein localises to the cytosol. The catalysed reaction is dihydroprecondylocarpine acetate + NADP(+) = precondylocarpine acetate + NADPH + H(+). Its pathway is alkaloid biosynthesis. Functionally, component of the seco-iridoid and derivatives monoterpenoid indole alkaloids (MIAs, e.g. vinblastine, catharanthine, tabersonine, vincadifformine, vindoline, vincristine, quinine and strychnine) biosynthesis pathway. Catalyzes the non-canonical 1,4-reduction of an alpha,beta-unsaturated iminium moiety; by contrast with the classic alcohol dehydrogenase mechanism, this reaction does not require a catalytic zinc or proton relay. Converts precondylocarpine acetate to dihydroprecondylocarpine acetate, that is spontaneously converted into dehydrosecodine intermediate, precursor of angryline. May also trigger the non-stereoselective 1,4-reduction reaction at C15 of dehydrosecodine leading to the production of secodine, a precursor of vincadifformine. This chain is Dehydroprecondylocarpine acetate synthase, found in Catharanthus roseus (Madagascar periwinkle).